Here is a 2715-residue protein sequence, read N- to C-terminus: Cilia- and flagella-associated protein 46 (2715 aa).

TPR repeat units lie at residues 89–122, 175–208, 261–295, 324–359, 426–459, 469–503, 807–845, 936–969, 1111–1144, and 1174–1211; these read CRAQMCAPKSAENLEEFENCVTEYMKAINFAKGE, AELMLELLECYLQAGRKEEAARFCSTAAPFIKSH, GDISVILRKAYRHLGHYNHQRFPSISEEKMLLLFE, PGKLIEMECLECESEALRLESKMKVYNRAAVEAQLD, CQVHMEMAQIEEDEDRLEPATEHLRKAARLDSLG, STRLRLCTTLYQAPERAEDKAIMAVEQAKKATPKD, SRKFMRPNAFHSPLDAGATSEIKTAVEVCEFALNLTNGS, LQTLTRLTHFAHAARDHETTMACAHRALEMGIKY, AALYGLLFHSHADQDDWEGGLKVLDEAVQVLPRT, and AESEDYLARMWHRLALNSPSVSGELACYNNAIQALQKP. The disordered stretch occupies residues 1356–1412; sequence SHLLLPKKEKENERSKEKEKERSKEKENERSKEKDKEKGKEEKVKEPKQSQSPAPIK. Basic and acidic residues predominate over residues 1361-1403; that stretch reads PKKEKENERSKEKEKERSKEKENERSKEKDKEKGKEEKVKEPK. The stretch at 1362–1401 forms a coiled coil; that stretch reads KKEKENERSKEKEKERSKEKENERSKEKDKEKGKEEKVKE. The stretch at 1639-1672 is one TPR 11 repeat; the sequence is AQCLLLLAQLANKEKNYGQAKKMIAQAQHLGGSE. Residues 1781–1810 adopt a coiled-coil conformation; sequence VDVKLERAKIKRLRAQNEKDEEQKTAYYLE. 3 disordered regions span residues 2000 to 2023, 2294 to 2319, and 2371 to 2399; these read EEEGATKSSRDPPASRAAPEEHCR, AVVADSGKSKGKDKERKTSTGQHSTV, and ETEGGVKKEGRSRDPKKRSLAKKGRKGSI. Composition is skewed to basic and acidic residues over residues 2300-2311 and 2371-2383; these read GKSKGKDKERKT and ETEGGVKKEGRSR. The segment covering 2384–2398 has biased composition (basic residues); that stretch reads DPKKRSLAKKGRKGS. 2 TPR repeats span residues 2399–2432 and 2504–2537; these read IPRTIPPDCIIVDSDNFKFVVDPYEEAQGPEMLT and VAVLLDLARSYQSLKRHMESVEHRRSVGRWEANW. Positions 2541–2567 are disordered; sequence ASPSEDEWRRGGEPRRGFSDLEGQAAA. Residues 2546 to 2559 are compositionally biased toward basic and acidic residues; that stretch reads DEWRRGGEPRRGFS.

It belongs to the CFAP46 family.

The protein resides in the cytoplasm. It localises to the cytoskeleton. It is found in the cilium axoneme. In terms of biological role, as part of the central apparatus of the cilium axoneme plays a role in cilium movement. The polypeptide is Cilia- and flagella-associated protein 46 (Homo sapiens (Human)).